A 550-amino-acid chain; its full sequence is MGNCLSCCEKSKDEQYEPLLADREREAVADLLSFLEDRNEVNFYSEEPLRALTILAYSDNLDLQRSAALAFAEITEKDVREVDRETIEPVLFLLQSPDAEIQRAASVALGNLAVNAENKALVVKLNGLDLLIRQMMSPHVEVQCNAVGCITNLATLDENKSKIAHSGALGPLTRLAKSKDIRVQRNATGALLNMTHSYENRQQLVSAGTIPVLVSLLPSSDTDVQYYCTTSISNIAVDAVHRKRLAQSEPKLVRSLIQLMDTSSPKVQCQAALALRNLASDERYQIEIVQSNALPSLLRLLRSSYLPLILASVACIRNISIHPLNESPIIDAGFLRPLVDLLSCTENEEIQCHAVSTLRNLAASSERNKRAIIEANAIQKLRCLILDAPVSVQSEMTACLAVLALSDEFKSYLLNFGICNVLIPLTDSMSIEVQGNSAAALGNLSSNVDDYSRFIECWDSPAGGIHGYLVRFLSSEDSTFAHIAAWTIVQLLEAGVPRLTAFIQSSDDIIELLNDIVARDANNGEYEDGEGDVILLSGRALHLIEQDTDS.

A lipid anchor (N-myristoyl glycine) is attached at glycine 2. Residues cysteine 4 and cysteine 7 are each lipidated (S-palmitoyl cysteine). ARM repeat units follow at residues 75 to 114 (TEKD…NLAV), 116 to 155 (AENK…NLAT), 157 to 196 (DENK…NMTH), 198 to 237 (YENR…NIAV), 241 to 280 (HRKR…NLAS), 282 to 321 (ERYQ…NISI), 323 to 363 (PLNE…NLAA), and 454 to 493 (FIEC…QLLE). Threonine 548 carries the phosphothreonine modification. Serine 550 bears the Phosphoserine mark.

This sequence belongs to the beta-catenin family.

Its subcellular location is the golgi apparatus membrane. The protein localises to the vacuole membrane. Functions in both vacuole inheritance and protein targeting from the cytoplasm to vacuole. This Schizosaccharomyces pombe (strain 972 / ATCC 24843) (Fission yeast) protein is Vacuolar protein 8 (vac8).